The sequence spans 343 residues: Tetraacyldisaccharide 4'-kinase (343 aa).

51–58 (HGGGAGKT) contributes to the ATP binding site.

The protein belongs to the LpxK family.

The enzyme catalyses a lipid A disaccharide + ATP = a lipid IVA + ADP + H(+). It functions in the pathway glycolipid biosynthesis; lipid IV(A) biosynthesis; lipid IV(A) from (3R)-3-hydroxytetradecanoyl-[acyl-carrier-protein] and UDP-N-acetyl-alpha-D-glucosamine: step 6/6. Its function is as follows. Transfers the gamma-phosphate of ATP to the 4'-position of a tetraacyldisaccharide 1-phosphate intermediate (termed DS-1-P) to form tetraacyldisaccharide 1,4'-bis-phosphate (lipid IVA). This chain is Tetraacyldisaccharide 4'-kinase, found in Rhodopseudomonas palustris (strain BisB18).